Reading from the N-terminus, the 85-residue chain is MAKERGDLLFPSIESEKRKHKLKRLVQAPNSFFMDINCHGCRTITTVFSHAQNVVICSSCSTVIAQPTGGRARITAGCRLRQKSD.

Residues 38–60 (CHGCRTITTVFSHAQNVVICSSC) form a C4-type zinc finger.

Belongs to the eukaryotic ribosomal protein eS27 family. The cofactor is Zn(2+).

The sequence is that of Small ribosomal subunit protein eS27 (rps27) from Dictyostelium discoideum (Social amoeba).